We begin with the raw amino-acid sequence, 131 residues long: Small ribosomal subunit protein uS9 (131 aa).

The protein belongs to the universal ribosomal protein uS9 family.

This chain is Small ribosomal subunit protein uS9, found in Actinobacillus succinogenes (strain ATCC 55618 / DSM 22257 / CCUG 43843 / 130Z).